The following is a 200-amino-acid chain: COMM domain-containing protein 7 (200 aa).

The 68-residue stretch at 133 to 200 folds into the COMM domain; it reads QLIDMEWKFG…RVRTSMECFC (68 aa).

The protein belongs to the COMM domain-containing protein 7 family. As to quaternary structure, component of the commander complex consisting of the CCC subcomplex and the retriever subcomplex. Component of the CCC (COMMD/CCDC22/CCDC93) subcomplex consisting of COMMD1, COMMD2, COMMD3, COMMD4, COMMD5, COMMD6, COMMD7, COMMD8, COMMD9, COMMD10, CCDC22 and CCDC93; within the complex forms a heterodimer with COMMD9. Interacts with RELA. Interacts with CCDC22, CCDC93, SCNN1B, CUL7. Widely expressed with highest expression in lung.

Its subcellular location is the cytoplasmic vesicle. Its function is as follows. Scaffold protein in the commander complex that is essential for endosomal recycling of transmembrane cargos; the commander complex is composed of the CCC subcomplex and the retriever subcomplex. May modulate activity of cullin-RING E3 ubiquitin ligase (CRL) complexes. Associates with the NF-kappa-B complex and suppresses its transcriptional activity. The polypeptide is COMM domain-containing protein 7 (COMMD7) (Homo sapiens (Human)).